Here is a 207-residue protein sequence, read N- to C-terminus: Glycerol-3-phosphate acyltransferase (207 aa).

5 helical membrane passes run Val4–Val24, Ile58–Leu78, Glu86–His106, Ile120–Ala140, and Val162–Ile182.

It belongs to the PlsY family. In terms of assembly, probably interacts with PlsX.

The protein localises to the cell inner membrane. It carries out the reaction an acyl phosphate + sn-glycerol 3-phosphate = a 1-acyl-sn-glycero-3-phosphate + phosphate. It participates in lipid metabolism; phospholipid metabolism. In terms of biological role, catalyzes the transfer of an acyl group from acyl-phosphate (acyl-PO(4)) to glycerol-3-phosphate (G3P) to form lysophosphatidic acid (LPA). This enzyme utilizes acyl-phosphate as fatty acyl donor, but not acyl-CoA or acyl-ACP. This chain is Glycerol-3-phosphate acyltransferase, found in Ralstonia pickettii (strain 12J).